Here is a 237-residue protein sequence, read N- to C-terminus: Ribosomal RNA small subunit methyltransferase G (237 aa).

S-adenosyl-L-methionine is bound by residues Gly78, Phe83, 129–130 (AE), and Arg148.

It belongs to the methyltransferase superfamily. RNA methyltransferase RsmG family.

It is found in the cytoplasm. Functionally, specifically methylates the N7 position of a guanine in 16S rRNA. The polypeptide is Ribosomal RNA small subunit methyltransferase G (Streptococcus pyogenes serotype M4 (strain MGAS10750)).